Consider the following 219-residue polypeptide: Proteasome subunit beta type-9 (219 aa).

A propeptide spans 1 to 20 (removed in mature form); sequence MLRAGAPTAGSFRTEEVHTG. Residue Thr-21 is the Nucleophile of the active site. N6-acetyllysine is present on residues Lys-53 and Lys-109.

The protein belongs to the peptidase T1B family. The 26S proteasome consists of a 20S proteasome core and two 19S regulatory subunits. The 20S proteasome core is composed of 28 subunits that are arranged in four stacked rings, resulting in a barrel-shaped structure. The two end rings are each formed by seven alpha subunits, and the two central rings are each formed by seven beta subunits. The catalytic chamber with the active sites is on the inside of the barrel. Component of the immunoproteasome, where it displaces the equivalent housekeeping subunit PSMB6. Component of the spermatoproteasome, a form of the proteasome specifically found in testis. In terms of processing, autocleaved. The resulting N-terminal Thr residue of the mature subunit is responsible for the nucleophile proteolytic activity.

Its subcellular location is the cytoplasm. It is found in the nucleus. The enzyme catalyses Cleavage of peptide bonds with very broad specificity.. Functionally, the proteasome is a multicatalytic proteinase complex which is characterized by its ability to cleave peptides with Arg, Phe, Tyr, Leu, and Glu adjacent to the leaving group at neutral or slightly basic pH. The proteasome has an ATP-dependent proteolytic activity. This subunit is involved in antigen processing to generate class I binding peptides. This Mus terricolor (Earth-colored mouse) protein is Proteasome subunit beta type-9 (Psmb9).